The primary structure comprises 433 residues: SPI-2 type 3 secretion system ATPase (433 aa).

G165–T170 is an ATP binding site.

This sequence belongs to the ATPase alpha/beta chains family. T3SS ATPase subfamily. In terms of assembly, the core secretion machinery of the T3SS is composed of approximately 20 different proteins, including cytoplasmic components, a base, an export apparatus and a needle. This subunit is part of the cytosolic complex. Forms homohexamers. Forms a complex with SsaK/SctL (stator protein) and SsaQ/SctQ (the major sorting platform component). Interacts with the T3SS-2 specific chaperones SsaE, SseA, SscA, SscB, and SrcA.

The protein resides in the cytoplasm. The catalysed reaction is ATP + H2O + cellular proteinSide 1 = ADP + phosphate + cellular proteinSide 2.. Its function is as follows. ATPase component of the type III secretion system (T3SS), also called injectisome, which is used to inject bacterial effector proteins into eukaryotic host cells. Acts as a molecular motor to provide the energy that is required for the export of proteins. Required for type III secretion apparatus (T3SA) formation, secretion of a subset of SPI-2 effectors and virulence. May play a critical role in T3SS substrate recognition, disassembly of the effector/chaperone complex and unfolding of the effector in an ATP-dependent manner prior to secretion. Releases the effector protein SseB from the T3SS-2 specific chaperone SsaE in an ATP-dependent manner. This Salmonella typhimurium (strain LT2 / SGSC1412 / ATCC 700720) protein is SPI-2 type 3 secretion system ATPase.